The chain runs to 383 residues: Smad nuclear-interacting protein 1 (383 aa).

Basic and acidic residues predominate over residues 1 to 10 (MKAGKSERER). A disordered region spans residues 1 to 209 (MKAGKSERER…NRSKEVPVKE (209 aa)). At Ser18 the chain carries Phosphoserine. Residue Lys28 forms a Glycyl lysine isopeptide (Lys-Gly) (interchain with G-Cter in SUMO); alternate linkage. Lys28 is covalently cross-linked (Glycyl lysine isopeptide (Lys-Gly) (interchain with G-Cter in SUMO1); alternate). Lys28 participates in a covalent cross-link: Glycyl lysine isopeptide (Lys-Gly) (interchain with G-Cter in SUMO2); alternate. Residues 28-43 (KQERLSPEPVAHRRPD) are compositionally biased toward basic and acidic residues. Phosphoserine occurs at positions 33, 48, and 50. Over residues 44-56 (APAASLSPPAAEP) the composition is skewed to low complexity. Over residues 59–90 (SGHRGSRARSPAKKKSKSSGRRSKSPRTKRSQ) the composition is skewed to basic residues. Ser91 carries the phosphoserine modification. Composition is skewed to basic and acidic residues over residues 99 to 134 (VKQE…ERDR) and 143 to 159 (RSSD…DRDS). Lys100 participates in a covalent cross-link: Glycyl lysine isopeptide (Lys-Gly) (interchain with G-Cter in SUMO2). Phosphoserine is present on Ser145. Positions 153-194 (QDRDRDSQNLQAQEEERDFHNARRREHRQQNESAGSEAQEVI) form a coiled coil. Residue Lys210 forms a Glycyl lysine isopeptide (Lys-Gly) (interchain with G-Cter in SUMO2) linkage. One can recognise an FHA domain in the interval 268-331 (YLLGRHRRIA…NGTFLNNKRI (64 aa)). The span at 359–369 (ESSDTSELDRK) shows a compositional bias: basic and acidic residues. Positions 359 to 383 (ESSDTSELDRKEDEDDEEEEMVSDS) are disordered. Residues 370–383 (EDEDDEEEEMVSDS) are compositionally biased toward acidic residues. Phosphoserine is present on Ser381.

As to quaternary structure, component of activated spliceosome complexes. Binds SMAD4 and CREBBP/EP300. Component of the minor spliceosome, which splices U12-type introns. Binds the SMAD1/OAZ1/PSMB4 complex. Interacts with DROSHA and SMARCA4. Component of the SNARP complex which consists at least of SNIP1, SNW1, THRAP3, BCLAF1 and PNN. In terms of processing, degraded by the proteasome upon binding to the SMAD1/OAZ1/PSMB4 complex.

The protein localises to the nucleus. Functionally, required for pre-mRNA splicing as component of the spliceosome. As a component of the minor spliceosome, involved in the splicing of U12-type introns in pre-mRNAs. Down-regulates NF-kappa-B signaling by competing with RELA for CREBBP/EP300 binding. Involved in the microRNA (miRNA) biogenesis. May be involved in cyclin-D1/CCND1 mRNA stability through the SNARP complex which associates with both the 3'end of the CCND1 gene and its mRNA. The chain is Smad nuclear-interacting protein 1 (Snip1) from Mus musculus (Mouse).